The primary structure comprises 340 residues: Holliday junction branch migration complex subunit RuvB (340 aa).

Residues 4-184 (TDRIVGGQSL…FGIVQRLEFY (181 aa)) form a large ATPase domain (RuvB-L) region. ATP-binding positions include arginine 24, glycine 65, lysine 68, threonine 69, threonine 70, 131–133 (EDF), arginine 174, tyrosine 184, and arginine 221. Threonine 69 contacts Mg(2+). A small ATPAse domain (RuvB-S) region spans residues 185–255 (SIEELAQIVT…IADLALNLLE (71 aa)). Positions 258-340 (PLGLDKMDRR…TMPERNLEDE (83 aa)) are head domain (RuvB-H). DNA-binding residues include arginine 294, arginine 313, and arginine 318.

The protein belongs to the RuvB family. As to quaternary structure, homohexamer. Forms an RuvA(8)-RuvB(12)-Holliday junction (HJ) complex. HJ DNA is sandwiched between 2 RuvA tetramers; dsDNA enters through RuvA and exits via RuvB. An RuvB hexamer assembles on each DNA strand where it exits the tetramer. Each RuvB hexamer is contacted by two RuvA subunits (via domain III) on 2 adjacent RuvB subunits; this complex drives branch migration. In the full resolvosome a probable DNA-RuvA(4)-RuvB(12)-RuvC(2) complex forms which resolves the HJ.

The protein localises to the cytoplasm. The catalysed reaction is ATP + H2O = ADP + phosphate + H(+). Its function is as follows. The RuvA-RuvB-RuvC complex processes Holliday junction (HJ) DNA during genetic recombination and DNA repair, while the RuvA-RuvB complex plays an important role in the rescue of blocked DNA replication forks via replication fork reversal (RFR). RuvA specifically binds to HJ cruciform DNA, conferring on it an open structure. The RuvB hexamer acts as an ATP-dependent pump, pulling dsDNA into and through the RuvAB complex. RuvB forms 2 homohexamers on either side of HJ DNA bound by 1 or 2 RuvA tetramers; 4 subunits per hexamer contact DNA at a time. Coordinated motions by a converter formed by DNA-disengaged RuvB subunits stimulates ATP hydrolysis and nucleotide exchange. Immobilization of the converter enables RuvB to convert the ATP-contained energy into a lever motion, pulling 2 nucleotides of DNA out of the RuvA tetramer per ATP hydrolyzed, thus driving DNA branch migration. The RuvB motors rotate together with the DNA substrate, which together with the progressing nucleotide cycle form the mechanistic basis for DNA recombination by continuous HJ branch migration. Branch migration allows RuvC to scan DNA until it finds its consensus sequence, where it cleaves and resolves cruciform DNA. The protein is Holliday junction branch migration complex subunit RuvB of Hydrogenovibrio crunogenus (strain DSM 25203 / XCL-2) (Thiomicrospira crunogena).